The following is a 298-amino-acid chain: Nucleotide-binding protein RSKD131_3085 (298 aa).

ATP is bound at residue 11–18; that stretch reads GPSGAGRT. 58 to 61 serves as a coordination point for GTP; it reads DVRN.

It belongs to the RapZ-like family.

Displays ATPase and GTPase activities. This chain is Nucleotide-binding protein RSKD131_3085, found in Cereibacter sphaeroides (strain KD131 / KCTC 12085) (Rhodobacter sphaeroides).